The following is a 123-amino-acid chain: Large ribosomal subunit protein uL29 (123 aa).

The residue at position 19 (K19) is an N6-acetyllysine. A Glycyl lysine isopeptide (Lys-Gly) (interchain with G-Cter in SUMO2) cross-link involves residue K25. S29 is subject to Phosphoserine. K43 carries the N6-acetyllysine modification.

It belongs to the universal ribosomal protein uL29 family. As to quaternary structure, component of the large ribosomal subunit.

Its subcellular location is the cytoplasm. Its function is as follows. Component of the large ribosomal subunit. The ribosome is a large ribonucleoprotein complex responsible for the synthesis of proteins in the cell. In Sus scrofa (Pig), this protein is Large ribosomal subunit protein uL29 (RPL35).